Consider the following 132-residue polypeptide: UPF0292 protein PH1700 (132 aa).

One can recognise a Toprim domain in the interval 20–100; sequence EGAIIVEGAR…KVDTETRREL (81 aa). Mg(2+) contacts are provided by E26, D69, and D71.

It belongs to the UPF0292 family. Requires Mg(2+) as cofactor.

The polypeptide is UPF0292 protein PH1700 (Pyrococcus horikoshii (strain ATCC 700860 / DSM 12428 / JCM 9974 / NBRC 100139 / OT-3)).